The sequence spans 261 residues: Ribosome biogenesis protein NSA2 (261 aa).

Residues 1–40 (MPQNDYIERHIKQHGKRLDHEERKRKREARESHKISERAQ) show a composition bias toward basic and acidic residues. The disordered stretch occupies residues 1–43 (MPQNDYIERHIKQHGKRLDHEERKRKREARESHKISERAQKLT). 2 short sequence motifs (nuclear localization signal) span residues 15–22 (GKRLDHEE) and 51–58 (AKKRYAEK). The interval 61–87 (MRKKIKAHEQSKVKGSSKPLDTDGDAL) is disordered.

It belongs to the eukaryotic ribosomal protein eS8 family. Ribosome biogenesis protein NSA2 subfamily. As to quaternary structure, component of the pre-66S ribosomal particle. Interacts with NOP7 and RRP1. Interacts with RSA4 (via WD repeats).

The protein localises to the nucleus. It localises to the nucleolus. Functionally, involved in the biogenesis of the 60S ribosomal subunit. May play a part in the quality control of pre-60S particles. Under normal, rapid growth conditions, high levels of NSA2 would allow the progression of pre-60S particles through the ITS2 processing. This chain is Ribosome biogenesis protein NSA2 (NSA2), found in Saccharomyces cerevisiae (strain YJM789) (Baker's yeast).